We begin with the raw amino-acid sequence, 557 residues long: Potassium-transporting ATPase potassium-binding subunit (557 aa).

12 helical membrane passes run 5-25 (GFLL…PLGS), 63-83 (LCAI…MLLG), 132-152 (GLTV…FALI), 170-190 (LLRI…LFFI), 253-273 (FVQM…FGEV), 283-303 (LLWA…WAEV), 329-349 (VLVS…AVIA), 356-376 (ALGG…FGGV), 379-399 (GLYG…LMIG), 416-436 (LTAL…ALAM), 484-504 (LLAL…MAIA), and 526-546 (LFVG…FIPA).

This sequence belongs to the KdpA family. In terms of assembly, the system is composed of three essential subunits: KdpA, KdpB and KdpC.

It localises to the cell inner membrane. Functionally, part of the high-affinity ATP-driven potassium transport (or Kdp) system, which catalyzes the hydrolysis of ATP coupled with the electrogenic transport of potassium into the cytoplasm. This subunit binds the periplasmic potassium ions and delivers the ions to the membrane domain of KdpB through an intramembrane tunnel. This chain is Potassium-transporting ATPase potassium-binding subunit, found in Escherichia coli O81 (strain ED1a).